The sequence spans 118 residues: ATP synthase subunit c (118 aa).

Helical transmembrane passes span 34–54 (AIFAVGAMIGAGIAIGVGAVG) and 88–108 (MAMAESIAIYALVVSLVLIFA).

This sequence belongs to the ATPase C chain family. In terms of assembly, F-type ATPases have 2 components, F(1) - the catalytic core - and F(0) - the membrane proton channel. F(1) has five subunits: alpha(3), beta(3), gamma(1), delta(1), epsilon(1). F(0) has three main subunits: a(1), b(2) and c(10-14). The alpha and beta chains form an alternating ring which encloses part of the gamma chain. F(1) is attached to F(0) by a central stalk formed by the gamma and epsilon chains, while a peripheral stalk is formed by the delta and b chains.

Its subcellular location is the cell inner membrane. Functionally, f(1)F(0) ATP synthase produces ATP from ADP in the presence of a proton or sodium gradient. F-type ATPases consist of two structural domains, F(1) containing the extramembraneous catalytic core and F(0) containing the membrane proton channel, linked together by a central stalk and a peripheral stalk. During catalysis, ATP synthesis in the catalytic domain of F(1) is coupled via a rotary mechanism of the central stalk subunits to proton translocation. Key component of the F(0) channel; it plays a direct role in translocation across the membrane. A homomeric c-ring of between 10-14 subunits forms the central stalk rotor element with the F(1) delta and epsilon subunits. The polypeptide is ATP synthase subunit c (Syntrophus aciditrophicus (strain SB)).